We begin with the raw amino-acid sequence, 582 residues long: ATP-dependent lipid A-core flippase (582 aa).

The next 5 helical transmembrane spans lie at 27-47, 69-89, 142-162, 165-185, and 249-269; these read LIVA…MISL, LIIF…TYCL, ALVS…LMFY, WQLS…IGVV, and AAAN…VLYL. Residues 28-310 enclose the ABC transmembrane type-1 domain; the sequence is IVAVIALVIN…LTNVTSQFQR (283 aa). Residues 342–578 enclose the ABC transporter domain; sequence VSVKDVSFTY…NGAYAQLHRI (237 aa). ATP is bound at residue 376 to 383; the sequence is GRSGSGKS.

The protein belongs to the ABC transporter superfamily. Lipid exporter (TC 3.A.1.106) family. In terms of assembly, homodimer.

The protein resides in the cell inner membrane. It carries out the reaction ATP + H2O + lipid A-core oligosaccharideSide 1 = ADP + phosphate + lipid A-core oligosaccharideSide 2.. Functionally, involved in lipopolysaccharide (LPS) biosynthesis. Translocates lipid A-core from the inner to the outer leaflet of the inner membrane. Transmembrane domains (TMD) form a pore in the inner membrane and the ATP-binding domain (NBD) is responsible for energy generation. The polypeptide is ATP-dependent lipid A-core flippase (Vibrio parahaemolyticus serotype O3:K6 (strain RIMD 2210633)).